The primary structure comprises 741 residues: Phosphoribosylformylglycinamidine synthase subunit PurL (741 aa).

H53 is a catalytic residue. Residues Y56 and K95 each coordinate ATP. E97 is a Mg(2+) binding site. Substrate is bound by residues 98 to 101 (SHNH) and R120. H99 (proton acceptor) is an active-site residue. Position 121 (D121) interacts with Mg(2+). Residue Q244 coordinates substrate. D274 contributes to the Mg(2+) binding site. 318–320 (ESQ) lines the substrate pocket. D501 and G538 together coordinate ATP. N539 is a binding site for Mg(2+). S541 serves as a coordination point for substrate.

It belongs to the FGAMS family. As to quaternary structure, monomer. Part of the FGAM synthase complex composed of 1 PurL, 1 PurQ and 2 PurS subunits.

The protein resides in the cytoplasm. The enzyme catalyses N(2)-formyl-N(1)-(5-phospho-beta-D-ribosyl)glycinamide + L-glutamine + ATP + H2O = 2-formamido-N(1)-(5-O-phospho-beta-D-ribosyl)acetamidine + L-glutamate + ADP + phosphate + H(+). It functions in the pathway purine metabolism; IMP biosynthesis via de novo pathway; 5-amino-1-(5-phospho-D-ribosyl)imidazole from N(2)-formyl-N(1)-(5-phospho-D-ribosyl)glycinamide: step 1/2. Its function is as follows. Part of the phosphoribosylformylglycinamidine synthase complex involved in the purines biosynthetic pathway. Catalyzes the ATP-dependent conversion of formylglycinamide ribonucleotide (FGAR) and glutamine to yield formylglycinamidine ribonucleotide (FGAM) and glutamate. The FGAM synthase complex is composed of three subunits. PurQ produces an ammonia molecule by converting glutamine to glutamate. PurL transfers the ammonia molecule to FGAR to form FGAM in an ATP-dependent manner. PurS interacts with PurQ and PurL and is thought to assist in the transfer of the ammonia molecule from PurQ to PurL. This chain is Phosphoribosylformylglycinamidine synthase subunit PurL, found in Ligilactobacillus salivarius (strain UCC118) (Lactobacillus salivarius).